Here is a 375-residue protein sequence, read N- to C-terminus: Chaperone protein DnaJ (375 aa).

The region spanning 5-70 (DYYEVLEISR…QKRQAYDRFG (66 aa)) is the J domain. The segment at 133 to 211 (GKEVTIQIPS…CHGHGRVRRN (79 aa)) adopts a CR-type zinc-finger fold. The Zn(2+) site is built by cysteine 146, cysteine 149, cysteine 163, cysteine 166, cysteine 185, cysteine 188, cysteine 199, and cysteine 202. 4 CXXCXGXG motif repeats span residues 146–153 (CEVCRGSG), 163–170 (CATCGGRG), 185–192 (CPQCNGSG), and 199–206 (CTNCHGHG).

It belongs to the DnaJ family. As to quaternary structure, homodimer. It depends on Zn(2+) as a cofactor.

The protein localises to the cytoplasm. Functionally, participates actively in the response to hyperosmotic and heat shock by preventing the aggregation of stress-denatured proteins and by disaggregating proteins, also in an autonomous, DnaK-independent fashion. Unfolded proteins bind initially to DnaJ; upon interaction with the DnaJ-bound protein, DnaK hydrolyzes its bound ATP, resulting in the formation of a stable complex. GrpE releases ADP from DnaK; ATP binding to DnaK triggers the release of the substrate protein, thus completing the reaction cycle. Several rounds of ATP-dependent interactions between DnaJ, DnaK and GrpE are required for fully efficient folding. Also involved, together with DnaK and GrpE, in the DNA replication of plasmids through activation of initiation proteins. The sequence is that of Chaperone protein DnaJ from Acidithiobacillus ferrooxidans (strain ATCC 23270 / DSM 14882 / CIP 104768 / NCIMB 8455) (Ferrobacillus ferrooxidans (strain ATCC 23270)).